We begin with the raw amino-acid sequence, 520 residues long: MMVINSVVVGTVVASKNVNEFEFVIENQVIDKIKKGEFVITKNTHGDYLLSKITKIVSVNALIGDKSEDASELAKIRGVIYSEEMLNNSSKFLASAKILGVINNESGSIESNVYPINVPQNVYLTKDDLLAKIFSNGSIEVGYLKVRSSTKVKLNAKELCSRHFAVLAMTGAGKSNTIAVLVQELFEKDKGKMNIVIVDPHGEYVKMRNTHILPAKLNPILVPEEHLAKLLGIGENSSVQKSFLVYAALTVKYECKENKKQISGLEYLKKIEEKLVECADKIANSEDKKRIYIEYYDGTRCRXKTVKKDDEMSINRVIEKLRWFINKNKNILGENEGMFDIKSDKINVLPLQKIEDEEAITIVGEFLKRVLKERIKSVHDEIVEIKALEKPTLVIIEEAHLFAAKNLKDRSGYWINRIAKEGRKFGVGLGLVSQRPKELNPTVLSQMNTKIILRIVEPTDQKYILESSENVGEDLLQDLPQLSTGEAIVVGSSLPLPALVKIKKYDGVLGGEDGLKNLKI.

Residues Arg162, 171–176, and 501–502 each bind ATP; these read GAGKSN and KI.

This sequence belongs to the HerA family.

It catalyses the reaction Couples ATP hydrolysis with the unwinding of duplex DNA at the replication fork by translocating in the 5'-3' direction. This creates two antiparallel DNA single strands (ssDNA). The leading ssDNA polymer is the template for DNA polymerase III holoenzyme which synthesizes a continuous strand.. The catalysed reaction is ATP + H2O = ADP + phosphate + H(+). The enzyme catalyses Couples ATP hydrolysis with the unwinding of duplex DNA by translocating in the 3'-5' direction.. Its function is as follows. A probably bidirectional DNA helicase. The protein is Probable helicase MJECL08 of Methanocaldococcus jannaschii (strain ATCC 43067 / DSM 2661 / JAL-1 / JCM 10045 / NBRC 100440) (Methanococcus jannaschii).